Consider the following 307-residue polypeptide: Malate dehydrogenase (307 aa).

NAD(+) is bound by residues 8 to 13 (GAGNVG) and Asp-32. Arg-81 and Arg-87 together coordinate substrate. Residues Asn-94 and 117–119 (VSN) each bind NAD(+). Substrate-binding residues include Asn-119 and Arg-150. The active-site Proton acceptor is the His-174.

This sequence belongs to the LDH/MDH superfamily. MDH type 3 family.

The enzyme catalyses (S)-malate + NAD(+) = oxaloacetate + NADH + H(+). Functionally, catalyzes the reversible oxidation of malate to oxaloacetate. The chain is Malate dehydrogenase from Dehalococcoides mccartyi (strain ATCC BAA-2100 / JCM 16839 / KCTC 5957 / BAV1).